The following is a 362-amino-acid chain: Mitochondrial distribution and morphology protein 12 (362 aa).

The region spanning 1–361 (MSFDINWSQL…WPSWLCFDMS (361 aa)) is the SMP-LTD domain. 2 disordered regions span residues 65–141 (DFYE…AATP) and 170–207 (TPSG…SKRG). Polar residues-rich tracts occupy residues 106-119 (VTLS…TQFA) and 170-187 (TPSG…MRTG). A compositionally biased stretch (low complexity) spans 192 to 201 (PISNTPISSS).

Belongs to the MDM12 family. As to quaternary structure, component of the ER-mitochondria encounter structure (ERMES) or MDM complex, composed of MMM1, MDM10, MDM12 and MDM34. An MMM1 homodimer associates with one molecule of MDM12 on each side in a pairwise head-to-tail manner, and the SMP-LTD domains of MMM1 and MDM12 generate a continuous hydrophobic tunnel for phospholipid trafficking.

The protein resides in the mitochondrion outer membrane. The protein localises to the endoplasmic reticulum membrane. Component of the ERMES/MDM complex, which serves as a molecular tether to connect the endoplasmic reticulum (ER) and mitochondria. Components of this complex are involved in the control of mitochondrial shape and protein biogenesis, and function in nonvesicular lipid trafficking between the ER and mitochondria. MDM12 is required for the interaction of the ER-resident membrane protein MMM1 and the outer mitochondrial membrane-resident beta-barrel protein MDM10. The MDM12-MMM1 subcomplex functions in the major beta-barrel assembly pathway that is responsible for biogenesis of all mitochondrial outer membrane beta-barrel proteins, and acts in a late step after the SAM complex. The MDM10-MDM12-MMM1 subcomplex further acts in the TOM40-specific pathway after the action of the MDM12-MMM1 complex. Essential for establishing and maintaining the structure of mitochondria and maintenance of mtDNA nucleoids. The chain is Mitochondrial distribution and morphology protein 12 from Meyerozyma guilliermondii (strain ATCC 6260 / CBS 566 / DSM 6381 / JCM 1539 / NBRC 10279 / NRRL Y-324) (Yeast).